A 500-amino-acid chain; its full sequence is Trehalose-6-phosphate synthase (500 aa).

Residue Arg-28 coordinates D-glucose 6-phosphate. 48 to 49 (GG) lines the UDP-alpha-D-glucose pocket. 2 residues coordinate D-glucose 6-phosphate: Tyr-104 and Asp-158. Positions 300 and 305 each coordinate UDP-alpha-D-glucose. Arg-338 serves as a coordination point for D-glucose 6-phosphate. 403–407 (LVAKE) provides a ligand contact to UDP-alpha-D-glucose.

It belongs to the glycosyltransferase 20 family. As to quaternary structure, homotetramer.

The catalysed reaction is ADP-alpha-D-glucose + D-glucose 6-phosphate = alpha,alpha-trehalose 6-phosphate + ADP + H(+). The enzyme catalyses CDP-alpha-D-glucose + D-glucose 6-phosphate = alpha,alpha-trehalose 6-phosphate + CDP + H(+). It carries out the reaction GDP-alpha-D-glucose + D-glucose 6-phosphate = alpha,alpha-trehalose 6-phosphate + GDP + H(+). It catalyses the reaction TDP-alpha-D-glucose + D-glucose 6-phosphate = 5-methyl-UDP + alpha,alpha-trehalose 6-phosphate + H(+). The catalysed reaction is D-glucose 6-phosphate + UDP-alpha-D-glucose = alpha,alpha-trehalose 6-phosphate + UDP + H(+). It functions in the pathway glycan biosynthesis; trehalose biosynthesis. Functionally, probably involved in the osmoprotection via the biosynthesis of trehalose and in the production of glycogen and alpha-glucan via the TreS-Pep2 branch involved in the biosynthesis of maltose-1-phosphate (M1P). Catalyzes the transfer of glucose from UDP-glucose (UDP-Glc) to D-glucose 6-phosphate (Glc-6-P) to form trehalose-6-phosphate. Probably also able to use ADP-Glc, CDP-Glc, GDP-Glc and TDP-Glc as glucosyl donors. This Mycobacterium ulcerans (strain Agy99) protein is Trehalose-6-phosphate synthase.